The chain runs to 748 residues: Photosystem I P700 chlorophyll a apoprotein A1 (748 aa).

8 helical membrane-spanning segments follow: residues 69–92 (IFSA…FHGA), 155–178 (LYVT…FHYH), 194–218 (LNHH…HVSL), 290–308 (VAHH…GHMY), 345–368 (WHAN…HHMY), 384–410 (LSLF…IYMV), 432–454 (AIIS…LYIH), and 529–547 (FMVH…LILL). [4Fe-4S] cluster contacts are provided by Cys-571 and Cys-580. Helical transmembrane passes span 587–608 (HVFL…HFSW) and 662–684 (LSAY…MFLF). His-673 is a binding site for chlorophyll a'. Chlorophyll a contacts are provided by Met-681 and Tyr-689. Trp-690 lines the phylloquinone pocket. The chain crosses the membrane as a helical span at residues 722-742 (AVGVAHYLLGGIATTWAFFLA).

Belongs to the PsaA/PsaB family. As to quaternary structure, the PsaA/B heterodimer binds the P700 chlorophyll special pair and subsequent electron acceptors. PSI consists of a core antenna complex that captures photons, and an electron transfer chain that converts photonic excitation into a charge separation. The eukaryotic PSI reaction center is composed of at least 11 subunits. The cofactor is P700 is a chlorophyll a/chlorophyll a' dimer, A0 is one or more chlorophyll a, A1 is one or both phylloquinones and FX is a shared 4Fe-4S iron-sulfur center..

The protein localises to the plastid. It localises to the chloroplast thylakoid membrane. The enzyme catalyses reduced [plastocyanin] + hnu + oxidized [2Fe-2S]-[ferredoxin] = oxidized [plastocyanin] + reduced [2Fe-2S]-[ferredoxin]. PsaA and PsaB bind P700, the primary electron donor of photosystem I (PSI), as well as the electron acceptors A0, A1 and FX. PSI is a plastocyanin/cytochrome c6-ferredoxin oxidoreductase, converting photonic excitation into a charge separation, which transfers an electron from the donor P700 chlorophyll pair to the spectroscopically characterized acceptors A0, A1, FX, FA and FB in turn. Oxidized P700 is reduced on the lumenal side of the thylakoid membrane by plastocyanin or cytochrome c6. The chain is Photosystem I P700 chlorophyll a apoprotein A1 from Cyanidioschyzon merolae (strain NIES-3377 / 10D) (Unicellular red alga).